A 388-amino-acid polypeptide reads, in one-letter code: UDP-4-amino-4-deoxy-L-arabinose--oxoglutarate aminotransferase (388 aa).

The residue at position 183 (Lys183) is an N6-(pyridoxal phosphate)lysine.

Belongs to the DegT/DnrJ/EryC1 family. ArnB subfamily. Homodimer. Pyridoxal 5'-phosphate is required as a cofactor.

The enzyme catalyses UDP-4-amino-4-deoxy-beta-L-arabinose + 2-oxoglutarate = UDP-beta-L-threo-pentopyranos-4-ulose + L-glutamate. It functions in the pathway nucleotide-sugar biosynthesis; UDP-4-deoxy-4-formamido-beta-L-arabinose biosynthesis; UDP-4-deoxy-4-formamido-beta-L-arabinose from UDP-alpha-D-glucuronate: step 2/3. It participates in bacterial outer membrane biogenesis; lipopolysaccharide biosynthesis. Its function is as follows. Catalyzes the conversion of UDP-4-keto-arabinose (UDP-Ara4O) to UDP-4-amino-4-deoxy-L-arabinose (UDP-L-Ara4N). The modified arabinose is attached to lipid A and is required for resistance to polymyxin and cationic antimicrobial peptides. The chain is UDP-4-amino-4-deoxy-L-arabinose--oxoglutarate aminotransferase from Shewanella sediminis (strain HAW-EB3).